The following is a 955-amino-acid chain: Glycine dehydrogenase (decarboxylating) (955 aa).

Position 705 is an N6-(pyridoxal phosphate)lysine (Lys705).

It belongs to the GcvP family. As to quaternary structure, the glycine cleavage system is composed of four proteins: P, T, L and H. Requires pyridoxal 5'-phosphate as cofactor.

It catalyses the reaction N(6)-[(R)-lipoyl]-L-lysyl-[glycine-cleavage complex H protein] + glycine + H(+) = N(6)-[(R)-S(8)-aminomethyldihydrolipoyl]-L-lysyl-[glycine-cleavage complex H protein] + CO2. The glycine cleavage system catalyzes the degradation of glycine. The P protein binds the alpha-amino group of glycine through its pyridoxal phosphate cofactor; CO(2) is released and the remaining methylamine moiety is then transferred to the lipoamide cofactor of the H protein. This chain is Glycine dehydrogenase (decarboxylating), found in Aliivibrio salmonicida (strain LFI1238) (Vibrio salmonicida (strain LFI1238)).